Consider the following 171-residue polypeptide: Peptidyl-prolyl cis-trans isomerase (171 aa).

The 164-residue stretch at 7–170 (FFDLTIGGAP…KPVVIADCGQ (164 aa)) folds into the PPIase cyclophilin-type domain.

It belongs to the cyclophilin-type PPIase family. Expressed in leaves, floral buds, growing shoots and stamens at anthesis.

The protein localises to the cytoplasm. The catalysed reaction is [protein]-peptidylproline (omega=180) = [protein]-peptidylproline (omega=0). With respect to regulation, binds cyclosporin A (CsA). CsA mediates some of its effects via an inhibitory action on PPIase. PPIases accelerate the folding of proteins. It catalyzes the cis-trans isomerization of proline imidic peptide bonds in oligopeptides. This Solanum lycopersicum (Tomato) protein is Peptidyl-prolyl cis-trans isomerase.